The following is a 199-amino-acid chain: Probable GTP-binding protein EngB (199 aa).

Positions 22 to 195 (QLPEIALSGR…WEWIEQQCDI (174 aa)) constitute an EngB-type G domain. GTP is bound by residues 30–37 (GRSNVGKS), 57–61 (GKTQT), 75–78 (DVPG), 142–145 (TKMD), and 174–176 (FSA). 2 residues coordinate Mg(2+): serine 37 and threonine 59.

The protein belongs to the TRAFAC class TrmE-Era-EngA-EngB-Septin-like GTPase superfamily. EngB GTPase family. It depends on Mg(2+) as a cofactor.

Necessary for normal cell division and for the maintenance of normal septation. The protein is Probable GTP-binding protein EngB of Latilactobacillus sakei subsp. sakei (strain 23K) (Lactobacillus sakei subsp. sakei).